A 994-amino-acid chain; its full sequence is Chromatin modification-related protein vid21 (994 aa).

Disordered regions lie at residues 122-275 and 288-308; these read PDNL…APPV and PKVD…ENDV. 5 stretches are compositionally biased toward basic and acidic residues: residues 158–171, 178–191, 204–233, 254–265, and 288–305; these read TIHK…KETI, KEVE…EEKG, LTEE…KEHE, VESKEVKKKEVS, and PKVD…KVTE. A phosphoserine mark is found at Ser298 and Ser378. One can recognise an HSA domain in the interval 475-548; sequence PKRQNEMPRL…SKNKKPYMQE (74 aa). Positions 671–693 are disordered; that stretch reads SFMEKKARSDENQLDGNKIKDDN. Basic and acidic residues predominate over residues 672–693; that stretch reads FMEKKARSDENQLDGNKIKDDN. In terms of domain architecture, Myb-like spans 713–773; that stretch reads KDIRPEAPWL…DCFERWIQVD (61 aa). 2 disordered regions span residues 857–880 and 975–994; these read TMTK…PSPL and EQIH…ERTQ. A coiled-coil region spans residues 880–912; that stretch reads LELSRLKSEREAQIQQIQAQRNFAQLQSQNRAL.

It belongs to the EAF1 family. In terms of assembly, component of the NuA4 histone acetyltransferase complex.

The protein resides in the nucleus. Its function is as follows. Component of the NuA4 histone acetyltransferase complex which is involved in transcriptional activation of selected genes principally by acetylation of nucleosomal histone H4 and H2A. The NuA4 complex is also involved in DNA repair. This is Chromatin modification-related protein vid21 (vid21) from Schizosaccharomyces pombe (strain 972 / ATCC 24843) (Fission yeast).